Here is a 551-residue protein sequence, read N- to C-terminus: Probable 4-coumarate--CoA ligase 3 (551 aa).

ATP-binding residues include serine 205, serine 206, glycine 207, threonine 208, threonine 209, and lysine 213. Residue phenylalanine 253 coordinates (E)-4-coumaroyl-AMP. Lysine 274 lines the CoA pocket. Positions 276–346 (EPVRFLELIK…RFKGRLVIKQ (71 aa)) are SBD1. The (E)-4-coumaroyl-AMP site is built by alanine 323, glutamine 346, glycine 347, and threonine 351. ATP contacts are provided by glutamine 346, glycine 347, threonine 351, aspartate 430, and arginine 445. The SBD2 stretch occupies residues 347 to 409 (GYGATELSPC…IKGPNVMLGY (63 aa)). (E)-4-coumaroyl-AMP contacts are provided by lysine 447 and lysine 451. Lysine 453 and glycine 454 together coordinate CoA. Residue lysine 537 coordinates ATP.

This sequence belongs to the ATP-dependent AMP-binding enzyme family. Mg(2+) serves as cofactor.

The catalysed reaction is (E)-4-coumarate + ATP + CoA = (E)-4-coumaroyl-CoA + AMP + diphosphate. It catalyses the reaction (E)-4-coumarate + ATP + H(+) = (E)-4-coumaroyl-AMP + diphosphate. The enzyme catalyses (E)-4-coumaroyl-AMP + CoA = (E)-4-coumaroyl-CoA + AMP + H(+). It functions in the pathway phytoalexin biosynthesis; 3,4',5-trihydroxystilbene biosynthesis; 3,4',5-trihydroxystilbene from trans-4-coumarate: step 1/2. Functionally, carboxylate--CoA ligase that may use 4-coumarate as substrate. Follows a two-step reaction mechanism, wherein the carboxylate substrate first undergoes adenylation by ATP, followed by a thioesterification in the presence of CoA to yield the final CoA thioester. This Dictyostelium discoideum (Social amoeba) protein is Probable 4-coumarate--CoA ligase 3 (4cl3).